The sequence spans 206 residues: Max dimerization protein 3 (206 aa).

Residues Ile8 to Ala25 are interaction with SIN3A and SIN3B. Disordered regions lie at residues Ala25–Lys67 and Arg146–Leu171. In terms of domain architecture, bHLH spans Ser57–Leu109.

Efficient DNA binding requires dimerization with another bHLH protein. Binds DNA as a heterodimer with MAX. Interacts with SIN3A AND SIN3B. Interacts with RNF17.

The protein resides in the nucleus. Transcriptional repressor. Binds with MAX to form a sequence-specific DNA-binding protein complex which recognizes the core sequence 5'-CAC[GA]TG-3'. Antagonizes MYC transcriptional activity by competing for MAX and suppresses MYC dependent cell transformation. The sequence is that of Max dimerization protein 3 (MXD3) from Homo sapiens (Human).